The following is a 701-amino-acid chain: Polyribonucleotide nucleotidyltransferase (701 aa).

Residues aspartate 480 and aspartate 486 each contribute to the Mg(2+) site. The KH domain occupies 547–606 (PKIDTIKIDVDKIKVVIGKGGETIDKIIAETGVKIDIDDEGNVSIYSSDQAAINRTKEII). An S1 motif domain is found at 616–684 (GEVYHAKVVR…EKGRVDASMK (69 aa)). The tract at residues 682-701 (SMKALIPRPPKPEKKEEKHD) is disordered. The span at 691 to 701 (PKPEKKEEKHD) shows a compositional bias: basic and acidic residues.

Belongs to the polyribonucleotide nucleotidyltransferase family. The cofactor is Mg(2+).

It localises to the cytoplasm. It catalyses the reaction RNA(n+1) + phosphate = RNA(n) + a ribonucleoside 5'-diphosphate. Involved in mRNA degradation. Catalyzes the phosphorolysis of single-stranded polyribonucleotides processively in the 3'- to 5'-direction. The protein is Polyribonucleotide nucleotidyltransferase of Streptococcus pyogenes serotype M12 (strain MGAS2096).